Consider the following 426-residue polypeptide: MSKSENLYSAARELIPGGVNSPVRAFTGVGGTPLFIEKADGAYLYDVDGKAYIDYVGSWGPMVLGHNHPAIRNAVIEAAERGLSFGAPTEMEVKMAELVTNLVPTMDMVRMVNSGTEATMSAIRLARGFTGRDKIIKFEGCYHGHADCLLVKAGSGALTLGQPNSPGVPADFAKHTLTCTYNDLTSVHAAFEQYPQEIACIIVEPVAGNMNCVPPLPEFLPGLRALCDEFGALLIIDEVMTGFRVALAGAQDYYGVVPDLTCLGKIIGGGMPVGAFGGRRDVMDALAPTGPVYQAGTLSGNPIAMAAGFACLNEVAQPGIHETLDELTTRLAEGLLEAAEDANIPLVVNHVGGMFGIFFTDAESVTCYQDVMACDVERFKRFFHLMLEEGVYLAPSAFEAGFMSVAHSEEDINNTIDAARRVFAKL.

An N6-(pyridoxal phosphate)lysine modification is found at K265.

It belongs to the class-III pyridoxal-phosphate-dependent aminotransferase family. HemL subfamily. As to quaternary structure, homodimer. Pyridoxal 5'-phosphate serves as cofactor.

It is found in the cytoplasm. The enzyme catalyses (S)-4-amino-5-oxopentanoate = 5-aminolevulinate. Its pathway is porphyrin-containing compound metabolism; protoporphyrin-IX biosynthesis; 5-aminolevulinate from L-glutamyl-tRNA(Glu): step 2/2. In Salmonella gallinarum (strain 287/91 / NCTC 13346), this protein is Glutamate-1-semialdehyde 2,1-aminomutase.